The sequence spans 224 residues: Ras-related protein Rab-11C (224 aa).

17 to 24 (GDSAVGKS) lines the GTP pocket. Residues 39–47 (TKATIGVDF) carry the Effector region motif. Residues 65–69 (DTAGQ) and 123–126 (NKSD) each bind GTP. A disordered region spans residues 194-224 (QGKKLTPLSDPAPQLTANTTSTHQEKKSGCC). 2 S-geranylgeranyl cysteine lipidation sites follow: C223 and C224.

Belongs to the small GTPase superfamily. Rab family.

The protein localises to the membrane. This chain is Ras-related protein Rab-11C (rab11C), found in Dictyostelium discoideum (Social amoeba).